Here is a 155-residue protein sequence, read N- to C-terminus: Aspartate carbamoyltransferase regulatory chain (155 aa).

Residues Cys-113, Cys-118, Cys-139, and Cys-142 each coordinate Zn(2+).

Belongs to the PyrI family. As to quaternary structure, contains catalytic and regulatory chains. It depends on Zn(2+) as a cofactor.

Its function is as follows. Involved in allosteric regulation of aspartate carbamoyltransferase. This is Aspartate carbamoyltransferase regulatory chain from Methanospirillum hungatei JF-1 (strain ATCC 27890 / DSM 864 / NBRC 100397 / JF-1).